The chain runs to 379 residues: Succinyl-diaminopimelate desuccinylase (379 aa).

Residue H70 coordinates Zn(2+). D72 is an active-site residue. Residue D103 coordinates Zn(2+). Residue E137 is the Proton acceptor of the active site. The Zn(2+) site is built by E138, E166, and H352.

The protein belongs to the peptidase M20A family. DapE subfamily. In terms of assembly, homodimer. Zn(2+) is required as a cofactor. It depends on Co(2+) as a cofactor.

It catalyses the reaction N-succinyl-(2S,6S)-2,6-diaminopimelate + H2O = (2S,6S)-2,6-diaminopimelate + succinate. Its pathway is amino-acid biosynthesis; L-lysine biosynthesis via DAP pathway; LL-2,6-diaminopimelate from (S)-tetrahydrodipicolinate (succinylase route): step 3/3. Catalyzes the hydrolysis of N-succinyl-L,L-diaminopimelic acid (SDAP), forming succinate and LL-2,6-diaminopimelate (DAP), an intermediate involved in the bacterial biosynthesis of lysine and meso-diaminopimelic acid, an essential component of bacterial cell walls. In Burkholderia ambifaria (strain ATCC BAA-244 / DSM 16087 / CCUG 44356 / LMG 19182 / AMMD) (Burkholderia cepacia (strain AMMD)), this protein is Succinyl-diaminopimelate desuccinylase.